The primary structure comprises 118 residues: Large ribosomal subunit protein bL20c (118 aa).

This sequence belongs to the bacterial ribosomal protein bL20 family.

It localises to the plastid. Its function is as follows. Binds directly to 23S ribosomal RNA and is necessary for the in vitro assembly process of the 50S ribosomal subunit. It is not involved in the protein synthesizing functions of that subunit. The polypeptide is Large ribosomal subunit protein bL20c (Aneura mirabilis (Parasitic liverwort)).